We begin with the raw amino-acid sequence, 248 residues long: Ubiquinone/menaquinone biosynthesis C-methyltransferase UbiE (248 aa).

Positions 68 and 92 each coordinate S-adenosyl-L-methionine.

This sequence belongs to the class I-like SAM-binding methyltransferase superfamily. MenG/UbiE family.

It carries out the reaction a 2-demethylmenaquinol + S-adenosyl-L-methionine = a menaquinol + S-adenosyl-L-homocysteine + H(+). It catalyses the reaction a 2-methoxy-6-(all-trans-polyprenyl)benzene-1,4-diol + S-adenosyl-L-methionine = a 5-methoxy-2-methyl-3-(all-trans-polyprenyl)benzene-1,4-diol + S-adenosyl-L-homocysteine + H(+). The protein operates within quinol/quinone metabolism; menaquinone biosynthesis; menaquinol from 1,4-dihydroxy-2-naphthoate: step 2/2. It participates in cofactor biosynthesis; ubiquinone biosynthesis. Its function is as follows. Methyltransferase required for the conversion of demethylmenaquinol (DMKH2) to menaquinol (MKH2) and the conversion of 2-polyprenyl-6-methoxy-1,4-benzoquinol (DDMQH2) to 2-polyprenyl-3-methyl-6-methoxy-1,4-benzoquinol (DMQH2). This chain is Ubiquinone/menaquinone biosynthesis C-methyltransferase UbiE, found in Rickettsia bellii (strain RML369-C).